A 154-amino-acid polypeptide reads, in one-letter code: Myoglobin (154 aa).

Residues 2-148 (GLSDQEWQQV…FRNDMASKYK (147 aa)) enclose the Globin domain. Residue His65 coordinates nitrite. O2 is bound at residue His65. Residue His94 participates in heme b binding.

Belongs to the globin family. Monomeric.

The protein resides in the cytoplasm. The protein localises to the sarcoplasm. It carries out the reaction Fe(III)-heme b-[protein] + nitric oxide + H2O = Fe(II)-heme b-[protein] + nitrite + 2 H(+). It catalyses the reaction H2O2 + AH2 = A + 2 H2O. Monomeric heme protein which primary function is to store oxygen and facilitate its diffusion within muscle tissues. Reversibly binds oxygen through a pentacoordinated heme iron and enables its timely and efficient release as needed during periods of heightened demand. Depending on the oxidative conditions of tissues and cells, and in addition to its ability to bind oxygen, it also has a nitrite reductase activity whereby it regulates the production of bioactive nitric oxide. Under stress conditions, like hypoxia and anoxia, it also protects cells against reactive oxygen species thanks to its pseudoperoxidase activity. The protein is Myoglobin (MB) of Gallus gallus (Chicken).